Reading from the N-terminus, the 573-residue chain is Zinc finger protein 10 (573 aa).

Residues 14–85 (VTFKDVFVDF…EREIHQETHP (72 aa)) form the KRAB domain. The segment at 206–232 (DSCASNSNECGQTFCQNIHLIQFARTH) adopts a C2H2-type 1; atypical zinc-finger fold. C2H2-type zinc fingers lie at residues 265–287 (YECKECGKFFSWRSNLTRHQLIH), 293–315 (YECKECGKSFSRSSHLIGHQKTH), 321–343 (YECKECGKSFSWFSHLVTHQRTH), 349–371 (YTCNQCGKSFVHSSRLIRHQRTH), 377–399 (YECPECGKSFRQSTHLILHQRTH), 405–427 (YECNECGKSYSQRSHLVVHHRIH), 433–455 (FECKDCGKCFSRSSHLYSHQRTH), 461–483 (YECHDCGKSFSQSSALIVHQRIH), and 489–511 (YECCQCGKAFIRKNDLIKHQRIH). A C2H2-type 11; atypical zinc finger spans residues 517 to 539 (YKCNQCGIIFSQNSPFIVHQIAH).

Belongs to the krueppel C2H2-type zinc-finger protein family. As to quaternary structure, interacts (via the KRAB domain) with TRIM28 (via the RBCC domain).

The protein localises to the nucleus. Its function is as follows. May be involved in transcriptional regulation. This is Zinc finger protein 10 (ZNF10) from Homo sapiens (Human).